The following is a 467-amino-acid chain: Xanthan biosynthesis protein XanB (467 aa).

Belongs to the mannose-6-phosphate isomerase type 2 family.

The catalysed reaction is D-mannose 6-phosphate = D-fructose 6-phosphate. The enzyme catalyses alpha-D-mannose 1-phosphate + GTP + H(+) = GDP-alpha-D-mannose + diphosphate. The protein operates within nucleotide-sugar biosynthesis; GDP-alpha-D-mannose biosynthesis; GDP-alpha-D-mannose from alpha-D-mannose 1-phosphate (GTP route): step 1/1. It participates in nucleotide-sugar biosynthesis; GDP-alpha-D-mannose biosynthesis; alpha-D-mannose 1-phosphate from D-fructose 6-phosphate: step 1/2. Functionally, involved in xanthan production. In Xanthomonas campestris pv. campestris (strain ATCC 33913 / DSM 3586 / NCPPB 528 / LMG 568 / P 25), this protein is Xanthan biosynthesis protein XanB (xanB).